The following is a 197-amino-acid chain: Recombination protein RecR (197 aa).

The segment at 57-72 adopts a C4-type zinc-finger fold; the sequence is CSRCGYLTDFDPCLIC. Positions 80–174 constitute a Toprim domain; it reads SLICIGEESS…KVTRLAHGLP (95 aa).

Belongs to the RecR family.

Its function is as follows. May play a role in DNA repair. It seems to be involved in an RecBC-independent recombinational process of DNA repair. It may act with RecF and RecO. The polypeptide is Recombination protein RecR (Syntrophomonas wolfei subsp. wolfei (strain DSM 2245B / Goettingen)).